The sequence spans 415 residues: WD-40 repeat-containing protein MSI2 (415 aa).

5 WD repeats span residues 166-206, 215-255, 258-298, 302-342, and 361-401; these read GHDK…QDKV, GHES…MQHQ, VHER…APLH, SHEG…EEQL, and GHKA…YRDE. The DWD box motif lies at 232–248; it reads LFGSAGEDGRLVIWDTR.

This sequence belongs to the WD repeat RBAP46/RBAP48/MSI1 family.

The protein resides in the nucleus. In terms of biological role, core histone-binding subunit that may target chromatin assembly factors, chromatin remodeling factors and histone deacetylases to their histone substrates in a manner that is regulated by nucleosomal DNA. This is WD-40 repeat-containing protein MSI2 (MSI2) from Arabidopsis thaliana (Mouse-ear cress).